Reading from the N-terminus, the 731-residue chain is 1,4-alpha-glucan branching enzyme GlgB (731 aa).

The active-site Nucleophile is the Asp411. Residue Glu464 is the Proton donor of the active site.

This sequence belongs to the glycosyl hydrolase 13 family. GlgB subfamily. In terms of assembly, monomer.

It carries out the reaction Transfers a segment of a (1-&gt;4)-alpha-D-glucan chain to a primary hydroxy group in a similar glucan chain.. It functions in the pathway glycan biosynthesis; glycogen biosynthesis. Functionally, catalyzes the formation of the alpha-1,6-glucosidic linkages in glycogen by scission of a 1,4-alpha-linked oligosaccharide from growing alpha-1,4-glucan chains and the subsequent attachment of the oligosaccharide to the alpha-1,6 position. In Mycobacterium ulcerans (strain Agy99), this protein is 1,4-alpha-glucan branching enzyme GlgB.